The chain runs to 520 residues: Zinc finger and BTB domain-containing protein 18 (520 aa).

The region spanning 24-91 (CDCTVLVGDA…MYEGILQFKG (68 aa)) is the BTB domain. The interval 121-140 (ATTDSTKKEEDTSSFSDKVE) is disordered. 4 consecutive C2H2-type zinc fingers follow at residues 368-390 (FMCP…LSTH), 408-430 (PTCS…ERTH), 436-458 (YTCT…AVVH), and 464-487 (HACK…RKFH).

It belongs to the krueppel C2H2-type zinc-finger protein family. ZBTB18 subfamily.

The protein localises to the nucleus. Transcriptional repressor that plays a role in various developmental processes. Specifically binds the consensus DNA sequence 5'-[AC]ACATCTG[GT][AC]-3' which contains the E box core, and acts by recruiting chromatin remodeling multiprotein complexes. The polypeptide is Zinc finger and BTB domain-containing protein 18 (zbtb18) (Xenopus laevis (African clawed frog)).